The primary structure comprises 236 residues: Ubiquinone biosynthesis O-methyltransferase (236 aa).

Residues arginine 40, glycine 59, aspartate 80, and leucine 124 each coordinate S-adenosyl-L-methionine.

Belongs to the methyltransferase superfamily. UbiG/COQ3 family.

The catalysed reaction is a 3-demethylubiquinol + S-adenosyl-L-methionine = a ubiquinol + S-adenosyl-L-homocysteine + H(+). It carries out the reaction a 3-(all-trans-polyprenyl)benzene-1,2-diol + S-adenosyl-L-methionine = a 2-methoxy-6-(all-trans-polyprenyl)phenol + S-adenosyl-L-homocysteine + H(+). The protein operates within cofactor biosynthesis; ubiquinone biosynthesis. In terms of biological role, O-methyltransferase that catalyzes the 2 O-methylation steps in the ubiquinone biosynthetic pathway. The protein is Ubiquinone biosynthesis O-methyltransferase of Saccharophagus degradans (strain 2-40 / ATCC 43961 / DSM 17024).